The sequence spans 272 residues: HMP-PP phosphatase (272 aa).

The active-site Nucleophile is D8. Mg(2+) is bound by residues D8, D10, and D212.

It belongs to the HAD-like hydrolase superfamily. Cof family. Mg(2+) serves as cofactor.

It carries out the reaction 4-amino-2-methyl-5-(diphosphooxymethyl)pyrimidine + H2O = 4-amino-2-methyl-5-(phosphooxymethyl)pyrimidine + phosphate + H(+). In terms of biological role, catalyzes the hydrolysis of 4-amino-2-methyl-5-hydroxymethylpyrimidine pyrophosphate (HMP-PP) to 4-amino-2-methyl-5-hydroxymethylpyrimidine phosphate (HMP-P). This is HMP-PP phosphatase from Escherichia coli (strain K12 / MC4100 / BW2952).